The following is a 126-amino-acid chain: Probable DNA-directed RNA polymerase II subunit RPB11 (126 aa).

This sequence belongs to the archaeal Rpo11/eukaryotic RPB11/RPC19 RNA polymerase subunit family. As to quaternary structure, component of the RNA polymerase II (Pol II) complex consisting of 12 subunits.

The protein localises to the nucleus. In terms of biological role, DNA-dependent RNA polymerase catalyzes the transcription of DNA into RNA using the four ribonucleoside triphosphates as substrates. Component of RNA polymerase II which synthesizes mRNA precursors and many functional non-coding RNAs. Pol II is the central component of the basal RNA polymerase II transcription machinery. It is composed of mobile elements that move relative to each other. RPB11 is part of the core element with the central large cleft. The protein is Probable DNA-directed RNA polymerase II subunit RPB11 of Plasmodium chabaudi chabaudi.